Here is a 225-residue protein sequence, read N- to C-terminus: 3-dehydroquinate dehydratase (225 aa).

3-dehydroquinate contacts are provided by residues 30–32 and Arg-62; that span reads EWR. Catalysis depends on His-118, which acts as the Proton donor/acceptor. The active-site Schiff-base intermediate with substrate is Lys-143. Positions 186, 205, and 209 each coordinate 3-dehydroquinate.

It belongs to the type-I 3-dehydroquinase family. Homodimer.

The catalysed reaction is 3-dehydroquinate = 3-dehydroshikimate + H2O. The protein operates within metabolic intermediate biosynthesis; chorismate biosynthesis; chorismate from D-erythrose 4-phosphate and phosphoenolpyruvate: step 3/7. Involved in the third step of the chorismate pathway, which leads to the biosynthesis of aromatic amino acids. Catalyzes the cis-dehydration of 3-dehydroquinate (DHQ) and introduces the first double bond of the aromatic ring to yield 3-dehydroshikimate. The polypeptide is 3-dehydroquinate dehydratase (Streptococcus thermophilus (strain ATCC BAA-491 / LMD-9)).